A 368-amino-acid chain; its full sequence is GLABROUS1 enhancer-binding protein-like (368 aa).

Positions 1–123 (MAPKKAEEVV…TSDTEHVKKP (123 aa)) are disordered. The span at 17-31 (SEEEESGSSGEESES) shows a compositional bias: acidic residues. Basic and acidic residues predominate over residues 35–47 (VPKKVESSQKPES). A compositionally biased stretch (polar residues) spans 84–97 (TSGSAATVPESSTA). Residues 100–123 (PLKEAAPEAIKKQKTSDTEHVKKP) show a composition bias toward basic and acidic residues.

It belongs to the GeBP family. As to quaternary structure, mono-, di- and oligomers. Associated with the Mediator complex. Interacts with MED6. Interacts with MED10A, MED28 and MED32. Interacts with DEK3.

It is found in the nucleus. In terms of biological role, transcription factor that binds promoters containing the CryR2 element, 5'-ACATAWCT-3'. The DNA-binding activity is decreased upon direct physical interaction with the mediator subunits and is modulated by redox conditions. The oxidized protein is the preferential binding form. This is GLABROUS1 enhancer-binding protein-like from Arabidopsis thaliana (Mouse-ear cress).